Here is a 468-residue protein sequence, read N- to C-terminus: 6-phosphogluconate dehydrogenase, decarboxylating (468 aa).

NADP(+) contacts are provided by residues 10 to 15 (GMAVMG), 33 to 35 (NRS), 74 to 76 (VKA), and N102. Residues N102 and 128–130 (SGG) contribute to the substrate site. The active-site Proton acceptor is K183. Position 186–187 (186–187 (HN)) interacts with substrate. E190 functions as the Proton donor in the catalytic mechanism. Residues Y191, K260, R287, R445, and H451 each contribute to the substrate site.

The protein belongs to the 6-phosphogluconate dehydrogenase family. In terms of assembly, homodimer.

The catalysed reaction is 6-phospho-D-gluconate + NADP(+) = D-ribulose 5-phosphate + CO2 + NADPH. It participates in carbohydrate degradation; pentose phosphate pathway; D-ribulose 5-phosphate from D-glucose 6-phosphate (oxidative stage): step 3/3. Catalyzes the oxidative decarboxylation of 6-phosphogluconate to ribulose 5-phosphate and CO(2), with concomitant reduction of NADP to NADPH. The chain is 6-phosphogluconate dehydrogenase, decarboxylating (gnd) from Klebsiella pneumoniae.